A 554-amino-acid polypeptide reads, in one-letter code: Serine/threonine-protein kinase ROP18 (554 aa).

A helical transmembrane segment spans residues 17 to 40; the sequence is GLATLLPKTACLAGLNVALVFLLF. Residues 252-531 form the Protein kinase domain; that stretch reads LVRGAPLGSG…PLQALETAAF (280 aa). Residues glycine 262, alanine 264, and lysine 281 each coordinate ATP. N-linked (GlcNAc...) asparagine glycosylation occurs at asparagine 306. ATP contacts are provided by methionine 357, alanine 359, and aspartate 362. Asparagine 377 carries an N-linked (GlcNAc...) asparagine glycan. Catalysis depends on aspartate 409, which acts as the Proton acceptor. Aspartate 427 contributes to the ATP binding site. A Mg(2+)-binding site is contributed by aspartate 427. N-linked (GlcNAc...) asparagine glycosylation occurs at asparagine 434. Cysteine 478 and cysteine 497 are disulfide-bonded.

This sequence belongs to the protein kinase superfamily. Ser/Thr protein kinase family. As to quaternary structure, component of a complex at least composed of ROP18, GRA7 and ROP2. Component of a complex at least composed of ROP18 and ROP5. Interacts with GRA7 in the absence of ROP5. Interacts with mouse IRGB6 (TGTP1/TGTP2).

The protein localises to the parasitophorous vacuole membrane. It localises to the cytoplasmic vesicle. The protein resides in the secretory vesicle. It is found in the rhoptry. It carries out the reaction L-threonyl-[protein] + ATP = O-phospho-L-threonyl-[protein] + ADP + H(+). The enzyme catalyses L-seryl-[protein] + ATP = O-phospho-L-seryl-[protein] + ADP + H(+). Its activity is regulated as follows. Kinase activity is enhanced by polymorphic pseudokinase ROP5. In terms of biological role, protein kinase. Virulence factor. Mediates parasite survival in mouse macrophages and monocytes. Reduces the accumulation of mouse IRGA6 (IIGP1) and IRGB6 (TGTP1/TGTP2), immunity-related GTPases (IRGs) that protect mice from infection by certain intracellular pathogens, on the parasitophorous vacuole and IRG-mediated killing of parasites by mouse cells; probably in connection with ROP5. In complex with GRA7, targets IRGs to prevent IRG-mediated parasite killing by mouse cells. Phosphorylates mouse IRGA6 (IIGP1); its activity toward mouse IRGA6 is promoted by GRA7 or ROP5. Phosphorylates mouse IRGB6 (TGTP1/TGTP2). Phosphorylates mouse IRGB10 (GM12250). Does not affect IFN-gamma (IFNG)-mediated parasite killing in human cells that do not possess the large variety of IRGs. This is Serine/threonine-protein kinase ROP18 from Toxoplasma gondii.